The chain runs to 201 residues: Adenylyl-sulfate kinase (201 aa).

35-42 contributes to the ATP binding site; that stretch reads GLSGSGKS. The active-site Phosphoserine intermediate is Ser-109.

It belongs to the APS kinase family.

The enzyme catalyses adenosine 5'-phosphosulfate + ATP = 3'-phosphoadenylyl sulfate + ADP + H(+). The protein operates within sulfur metabolism; hydrogen sulfide biosynthesis; sulfite from sulfate: step 2/3. Catalyzes the synthesis of activated sulfate. In Salmonella gallinarum (strain 287/91 / NCTC 13346), this protein is Adenylyl-sulfate kinase.